A 326-amino-acid polypeptide reads, in one-letter code: uncharacterized protein (326 aa).

Residue tyrosine 53 is the Proton donor of the active site. Serine 215–lysine 225 serves as a coordination point for NADP(+). Residues isoleucine 242–isoleucine 305 adopt a coiled-coil conformation.

It belongs to the aldo/keto reductase family. Aldo/keto reductase 2 subfamily.

This is an uncharacterized protein from Bacillus subtilis (strain 168).